The sequence spans 285 residues: Protein HtrL (285 aa).

This is Protein HtrL from Escherichia coli (strain K12).